The chain runs to 677 residues: Methionine--tRNA ligase (677 aa).

Positions 15–25 match the 'HIGH' region motif; it reads PYANGSIHLGH. Zn(2+)-binding residues include cysteine 146, cysteine 149, cysteine 159, and cysteine 162. The short motif at 333–337 is the 'KMSKS' region element; that stretch reads KMSKS. Lysine 336 serves as a coordination point for ATP. A tRNA-binding domain is found at 575–677; that stretch reads DFAKVDLRVA…AGAKPGHQVK (103 aa).

Belongs to the class-I aminoacyl-tRNA synthetase family. MetG type 1 subfamily. As to quaternary structure, homodimer. Requires Zn(2+) as cofactor.

The protein resides in the cytoplasm. It catalyses the reaction tRNA(Met) + L-methionine + ATP = L-methionyl-tRNA(Met) + AMP + diphosphate. Functionally, is required not only for elongation of protein synthesis but also for the initiation of all mRNA translation through initiator tRNA(fMet) aminoacylation. The sequence is that of Methionine--tRNA ligase from Escherichia coli O127:H6 (strain E2348/69 / EPEC).